A 616-amino-acid chain; its full sequence is Large ribosomal subunit assembly factor BipA (616 aa).

Residues 8–204 (KKLRNIAIIA…AIVKHVEPPK (197 aa)) enclose the tr-type G domain. Residues 20 to 25 (DHGKTT) and 134 to 137 (NKVD) each bind GTP.

Belongs to the TRAFAC class translation factor GTPase superfamily. Classic translation factor GTPase family. BipA subfamily. As to quaternary structure, monomer.

The protein resides in the cytoplasm. The catalysed reaction is GTP + H2O = GDP + phosphate + H(+). A 50S ribosomal subunit assembly protein with GTPase activity, required for 50S subunit assembly at low temperatures, may also play a role in translation. Binds GTP and analogs. Binds the 70S ribosome between the 30S and 50S subunits, in a similar position as ribosome-bound EF-G; it contacts a number of ribosomal proteins, both rRNAs and the A-site tRNA. The polypeptide is Large ribosomal subunit assembly factor BipA (Haemophilus influenzae (strain ATCC 51907 / DSM 11121 / KW20 / Rd)).